The following is a 297-amino-acid chain: Flavin-dependent thymidylate synthase (297 aa).

The region spanning 41–251 (GFVRLVDYMG…PLTYAAFVEY (211 aa)) is the ThyX domain. FAD-binding positions include Thr-87, 110 to 112 (RHR), and Glu-118. DUMP-binding positions include 107-110 (QWVR), 118-122 (EYSAR), and Arg-190. Residues 110-120 (RHRTANVNEYS) carry the ThyX motif motif. FAD contacts are provided by residues 206-208 (DLH) and His-212. Arg-217 serves as a coordination point for dUMP. Arg-217 (involved in ionization of N3 of dUMP, leading to its activation) is an active-site residue.

The protein belongs to the thymidylate synthase ThyX family. In terms of assembly, homotetramer. It depends on FAD as a cofactor.

It catalyses the reaction dUMP + (6R)-5,10-methylene-5,6,7,8-tetrahydrofolate + NADPH + H(+) = dTMP + (6S)-5,6,7,8-tetrahydrofolate + NADP(+). Its pathway is pyrimidine metabolism; dTTP biosynthesis. Catalyzes the reductive methylation of 2'-deoxyuridine-5'-monophosphate (dUMP) to 2'-deoxythymidine-5'-monophosphate (dTMP) while utilizing 5,10-methylenetetrahydrofolate (mTHF) as the methyl donor, and NADPH and FADH(2) as the reductant. This Ehrlichia ruminantium (strain Gardel) protein is Flavin-dependent thymidylate synthase.